The primary structure comprises 198 residues: Peptidyl-tRNA hydrolase (198 aa).

Tyr15 is a binding site for tRNA. His20 serves as the catalytic Proton acceptor. Positions 66, 68, and 114 each coordinate tRNA.

Belongs to the PTH family. As to quaternary structure, monomer.

It is found in the cytoplasm. It carries out the reaction an N-acyl-L-alpha-aminoacyl-tRNA + H2O = an N-acyl-L-amino acid + a tRNA + H(+). Functionally, hydrolyzes ribosome-free peptidyl-tRNAs (with 1 or more amino acids incorporated), which drop off the ribosome during protein synthesis, or as a result of ribosome stalling. In terms of biological role, catalyzes the release of premature peptidyl moieties from peptidyl-tRNA molecules trapped in stalled 50S ribosomal subunits, and thus maintains levels of free tRNAs and 50S ribosomes. The protein is Peptidyl-tRNA hydrolase of Cupriavidus taiwanensis (strain DSM 17343 / BCRC 17206 / CCUG 44338 / CIP 107171 / LMG 19424 / R1) (Ralstonia taiwanensis (strain LMG 19424)).